A 554-amino-acid chain; its full sequence is Inactive serine/threonine-protein kinase/endoribonuclease IRE1-like (554 aa).

The N-terminal stretch at 1–17 is a signal peptide; it reads MWLLAISLVGLLVVVVC. The interval 36-85 is disordered; that stretch reads KRDKNSAPRVSASGEDGTKNEQVEKKSDPSGGLGEENEKTNSESKVLSVP. Residues 51-63 show a composition bias toward basic and acidic residues; the sequence is DGTKNEQVEKKSD. Residues 121-408 form the Protein kinase domain; that stretch reads LVSTNEMKYG…ATQVLLHPLF (288 aa). Lysine 150 lines the ATP pocket. Residues 411 to 554 enclose the KEN domain; that stretch reads SEKRLFFLRE…GEEAFEKYFN (144 aa).

Belongs to the protein kinase superfamily. Ser/Thr protein kinase family.

The chain is Inactive serine/threonine-protein kinase/endoribonuclease IRE1-like from Arabidopsis thaliana (Mouse-ear cress).